Consider the following 198-residue polypeptide: Phosphoheptose isomerase (198 aa).

Positions 36 to 198 (MARALGADRK…DRTLFGGPGG (163 aa)) constitute an SIS domain. 51–53 (NGG) contributes to the substrate binding site. Histidine 60 and glutamate 64 together coordinate Zn(2+). Substrate-binding positions include glutamate 64, 93 to 94 (ND), 119 to 121 (STS), serine 124, and glutamine 174. Zn(2+) is bound by residues glutamine 174 and histidine 182.

It belongs to the SIS family. GmhA subfamily. As to quaternary structure, homotetramer. Requires Zn(2+) as cofactor.

Its subcellular location is the cytoplasm. It catalyses the reaction 2 D-sedoheptulose 7-phosphate = D-glycero-alpha-D-manno-heptose 7-phosphate + D-glycero-beta-D-manno-heptose 7-phosphate. The protein operates within carbohydrate biosynthesis; D-glycero-D-manno-heptose 7-phosphate biosynthesis; D-glycero-alpha-D-manno-heptose 7-phosphate and D-glycero-beta-D-manno-heptose 7-phosphate from sedoheptulose 7-phosphate: step 1/1. Catalyzes the isomerization of sedoheptulose 7-phosphate in D-glycero-D-manno-heptose 7-phosphate. This chain is Phosphoheptose isomerase, found in Halorhodospira halophila (strain DSM 244 / SL1) (Ectothiorhodospira halophila (strain DSM 244 / SL1)).